The sequence spans 560 residues: MDSKKGRPKAAAGKWQTLHPGPKTRAAAGKPGENRPPQRKAGWQAREPASAESPQAPTGPAEDRAARAIQGAFRQLRARRELARRREERREYLEQMETPQKEAYLAPVRREQEAARRLREQEEAAQRERREELQRRRRLLDAAFDGDVGEIRAVLKEVEQLLTREGVGHDEAGEARRLQRRVALAECEDSYGNTPLSEAAAGGQPLAIQLRAELGASPNSKGAFGPTPLYRAAFGGHLAAVEVLLKLGADPRVYAEDGSTPERVASLDTVVSVLRSWDLSLTEAMLQNMEAEQQRRAQEAQRHKEAEAERCGSMTLKVQQLTREQQQCHKELQQAYCELSRRISEHDQCEWRCMDKTKLTLQAIKDTEAQVDRLRQEAQKAEEALAMARLELREQTQEGEEEAPGLKCQVTELHDVLMKDVGNRIRADGRWPLVIDPLGQAATFLRYQDTNYVDTVNPEPLRPETMWLALLGALRYGKPLVFDLREEDLFPVVQRQLEAVQERYLSLLRPTDGPEYSPTQFQEQRLEHFRLFFVTKVQWPPAEQLQVLLPVRVQLPGTGL.

The disordered stretch occupies residues 1-72 (MDSKKGRPKA…DRAARAIQGA (72 aa)). The IQ domain occupies 62–91 (EDRAARAIQGAFRQLRARRELARRREERRE). ANK repeat units lie at residues 191–223 (YGNTPLSEAAAGGQPLAIQLRAELGASPNSKGA) and 224–253 (FGPTPLYRAAFGGHLAAVEVLLKLGADPRV). The stretch at 281–398 (LTEAMLQNME…RLELREQTQE (118 aa)) forms a coiled coil.

This is IQ motif and ankyrin repeat domain-containing protein 1 from Homo sapiens (Human).